Consider the following 503-residue polypeptide: Cytochrome P450 11B1, mitochondrial (503 aa).

The N-terminal 24 residues, 1–24 (MALRAKAEVCMAVPWLSLQRAQAL), are a transit peptide targeting the mitochondrion. Position 450 (Cys-450) interacts with heme.

It belongs to the cytochrome P450 family. Heme is required as a cofactor. Expressed in the zona fasciculata/reticularis of the adrenal cortex.

It localises to the mitochondrion inner membrane. The enzyme catalyses a steroid + 2 reduced [adrenodoxin] + O2 + 2 H(+) = an 11beta-hydroxysteroid + 2 oxidized [adrenodoxin] + H2O. The catalysed reaction is 11-deoxycortisol + 2 reduced [adrenodoxin] + O2 + 2 H(+) = cortisol + 2 oxidized [adrenodoxin] + H2O. It catalyses the reaction 21-hydroxyprogesterone + 2 reduced [adrenodoxin] + O2 + 2 H(+) = corticosterone + 2 oxidized [adrenodoxin] + H2O. It participates in steroid biosynthesis; glucocorticoid biosynthesis. Its pathway is steroid hormone biosynthesis. In terms of biological role, a cytochrome P450 monooxygenase involved in the biosynthesis of adrenal corticoids. Catalyzes a variety of reactions that are essential for many species, including detoxification, defense, and the formation of endogenous chemicals like steroid hormones. Steroid 11beta, 18- and 19-hydroxylase with preferred regioselectivity at 11beta, then 18, and lastly 19. Catalyzes the hydroxylation of 11-deoxycortisol and 11-deoxycorticosterone (21-hydroxyprogesterone) at 11beta position, yielding cortisol or corticosterone, respectively, but cannot produce aldosterone. Mechanistically, uses molecular oxygen inserting one oxygen atom into a substrate for hydroxylation and reducing the second into a water molecule. Two electrons are provided by NADPH via a two-protein mitochondrial transfer system comprising flavoprotein FDXR (adrenodoxin/ferredoxin reductase) and nonheme iron-sulfur protein FDX1 or FDX2 (adrenodoxin/ferredoxin). Due to its lack of 18-oxidation activity, it is incapable of generating aldosterone. Could also be involved in the androgen metabolic pathway. This Homo sapiens (Human) protein is Cytochrome P450 11B1, mitochondrial.